Here is a 285-residue protein sequence, read N- to C-terminus: Nucleotide-binding protein Gmet_1286 (285 aa).

Gly8 to Ser15 lines the ATP pocket. Residue Asp59–Gly62 coordinates GTP.

The protein belongs to the RapZ-like family.

Its function is as follows. Displays ATPase and GTPase activities. The protein is Nucleotide-binding protein Gmet_1286 of Geobacter metallireducens (strain ATCC 53774 / DSM 7210 / GS-15).